Reading from the N-terminus, the 490-residue chain is Ketol-acid reductoisomerase (NADP(+)) (490 aa).

In terms of domain architecture, KARI N-terminal Rossmann spans A18–S208. Residues C45–Q48, R68, R76, S78, and D108–Q110 each bind NADP(+). Residue H132 is part of the active site. NADP(+) is bound at residue G158. 2 consecutive KARI C-terminal knotted domains span residues S209–A344 and G345–M486. Residues D217, E221, E389, and E393 each contribute to the Mg(2+) site. Position 414 (S414) interacts with substrate.

Belongs to the ketol-acid reductoisomerase family. The cofactor is Mg(2+).

The catalysed reaction is (2R)-2,3-dihydroxy-3-methylbutanoate + NADP(+) = (2S)-2-acetolactate + NADPH + H(+). The enzyme catalyses (2R,3R)-2,3-dihydroxy-3-methylpentanoate + NADP(+) = (S)-2-ethyl-2-hydroxy-3-oxobutanoate + NADPH + H(+). Its pathway is amino-acid biosynthesis; L-isoleucine biosynthesis; L-isoleucine from 2-oxobutanoate: step 2/4. It functions in the pathway amino-acid biosynthesis; L-valine biosynthesis; L-valine from pyruvate: step 2/4. Its function is as follows. Involved in the biosynthesis of branched-chain amino acids (BCAA). Catalyzes an alkyl-migration followed by a ketol-acid reduction of (S)-2-acetolactate (S2AL) to yield (R)-2,3-dihydroxy-isovalerate. In the isomerase reaction, S2AL is rearranged via a Mg-dependent methyl migration to produce 3-hydroxy-3-methyl-2-ketobutyrate (HMKB). In the reductase reaction, this 2-ketoacid undergoes a metal-dependent reduction by NADPH to yield (R)-2,3-dihydroxy-isovalerate. The polypeptide is Ketol-acid reductoisomerase (NADP(+)) (Marinomonas sp. (strain MWYL1)).